We begin with the raw amino-acid sequence, 630 residues long: Terpinolene synthase, chloroplastic (630 aa).

A chloroplast-targeting transit peptide spans Met-1–Ser-52. Asp-381, Asp-385, Asn-525, and Asp-533 together coordinate Mg(2+). The DDXXD motif signature appears at Asp-381–Asp-385.

This sequence belongs to the terpene synthase family. Tpsd subfamily. It depends on Mg(2+) as a cofactor. Mn(2+) is required as a cofactor. The cofactor is K(+).

It is found in the plastid. It localises to the chloroplast. The enzyme catalyses (2E)-geranyl diphosphate = terpinolene + diphosphate. The protein operates within terpene metabolism; oleoresin biosynthesis. Involved in defensive oleoresin formation in conifers in response to insect attack or other injury. Involved in monoterpene (C10) olefins biosynthesis. The polypeptide is Terpinolene synthase, chloroplastic (ag9) (Abies grandis (Grand fir)).